The following is a 101-amino-acid chain: Small ribosomal subunit protein uS14 (101 aa).

It belongs to the universal ribosomal protein uS14 family. Part of the 30S ribosomal subunit. Contacts proteins S3 and S10.

In terms of biological role, binds 16S rRNA, required for the assembly of 30S particles and may also be responsible for determining the conformation of the 16S rRNA at the A site. This Albidiferax ferrireducens (strain ATCC BAA-621 / DSM 15236 / T118) (Rhodoferax ferrireducens) protein is Small ribosomal subunit protein uS14.